A 75-amino-acid polypeptide reads, in one-letter code: Movement protein TGBp3 (75 aa).

Topologically, residues 1–2 (MR) are lumenal. Residues 3-23 (VLDLILALITAAVVGYTIALV) form a helical membrane-spanning segment. Topologically, residues 24–75 (SNSGCYVHFDGRSATTTCPPGPWVESIANGLYTAGLARPHPEPECERRQSSW) are cytoplasmic.

It belongs to the Tymovirales TGBp3 protein family.

The protein localises to the host endoplasmic reticulum membrane. Plays a role in viral cell-to-cell propagation, by facilitating genome transport to neighboring plant cells through plasmosdesmata. May induce the formation of granular vesicles derived from the Endoplasmic reticulum, which align on actin filaments. The chain is Movement protein TGBp3 from Strawberry mild yellow edge-associated virus (SMYEaV).